The following is a 319-amino-acid chain: Triacylglycerol lipase (319 aa).

Residues 10–288 (PVILVHGLAG…TSYHWNHLDE (279 aa)) form the AB hydrolase-1 domain. L17 contributes to the substrate binding site. S87 (nucleophile) is an active-site residue. Residue Q88 participates in substrate binding. C190 and C269 are oxidised to a cystine. D241 serves as a coordination point for Ca(2+). Catalysis depends on charge relay system residues D263 and H285. Residues D287, Q291, and V295 each contribute to the Ca(2+) site.

Belongs to the AB hydrolase superfamily. Pseudomonas lipase family. Monomer. Interacts with lipase-specific foldase Lif. Ca(2+) serves as cofactor.

Its subcellular location is the secreted. The enzyme catalyses a triacylglycerol + H2O = a diacylglycerol + a fatty acid + H(+). Its function is as follows. Catalyzes the hydrolysis of triacylglycerol. This Pseudarthrobacter phenanthrenivorans (Arthrobacter phenanthrenivorans) protein is Triacylglycerol lipase.